Reading from the N-terminus, the 118-residue chain is MRNWRWLLLVLAALLSWLQHRFWFGPGNSGEVRMLQVQIVQQHQENERLRQRNASLAAEVKNLKDGDAAIEERARSELGMIKPGEIFYRVVEDIPTPLPNDTSADHGVDLAQPRREKR.

Residues 1-6 (MRNWRW) are Cytoplasmic-facing. Residues 7 to 24 (LLLVLAALLSWLQHRFWF) form a helical membrane-spanning segment. At 25–118 (GPGNSGEVRM…DLAQPRREKR (94 aa)) the chain is on the periplasmic side. Positions 30-66 (GEVRMLQVQIVQQHQENERLRQRNASLAAEVKNLKDG) form a coiled coil. A disordered region spans residues 97 to 118 (PLPNDTSADHGVDLAQPRREKR). The span at 103–118 (SADHGVDLAQPRREKR) shows a compositional bias: basic and acidic residues.

Belongs to the FtsB family. Part of a complex composed of FtsB, FtsL and FtsQ.

The protein localises to the cell inner membrane. Its function is as follows. Essential cell division protein. May link together the upstream cell division proteins, which are predominantly cytoplasmic, with the downstream cell division proteins, which are predominantly periplasmic. The polypeptide is Cell division protein FtsB (Xylella fastidiosa (strain 9a5c)).